A 249-amino-acid polypeptide reads, in one-letter code: Protein obstructor-E (249 aa).

The N-terminal stretch at 1–21 is a signal peptide; the sequence is MAKILISALLCVAMFGSMALG. In terms of domain architecture, Chitin-binding type-2 1 spans 22 to 80; sequence SPECPTPNGRFASGDQCDSYTECQDGTPVEKLCPDGLLFHQRTKATGECTYAPYSTCKE. A disulfide bridge links cysteine 54 with cysteine 70. A glycan (N-linked (GlcNAc...) asparagine) is linked at asparagine 88. 2 Chitin-binding type-2 domains span residues 90–148 and 170–227; these read TEEC…SCNA and VDVS…ECYA. Cystine bridges form between cysteine 124–cysteine 137 and cysteine 203–cysteine 216.

As to expression, uniformly expressed throughout the cuticle of third instar larva.

The protein resides in the secreted. It localises to the extracellular space. The protein localises to the extracellular matrix. Its function is as follows. Chitin-binding protein that is important for the longitudinal contraction and lateral expansion of the larval cuticle during its conversion into the oval-shaped puparium case. Essential for survival to the second instar larval stage. Confers the orientated contractility and expandability of the larval cuticle by regulating the arrangement of chitin and the formation of supracellular ridges on the cuticle of third instar larvae. Essential for determining pupal body shape; required for the orientated shape change of the cuticle during metamorphosis which involves changes in the morphology of the supracellular ridges. In terms of biological role, mainly involved in regulating pupal shape. Functionally, mainly involved in larvae survival, possibly by maintaining the normal morphology of the larval hindgut during development. The polypeptide is Protein obstructor-E (Drosophila melanogaster (Fruit fly)).